We begin with the raw amino-acid sequence, 243 residues long: 1-(5-phosphoribosyl)-5-[(5-phosphoribosylamino)methylideneamino] imidazole-4-carboxamide isomerase (243 aa).

The active-site Proton acceptor is the aspartate 10. Aspartate 129 (proton donor) is an active-site residue.

This sequence belongs to the HisA/HisF family.

It is found in the cytoplasm. The enzyme catalyses 1-(5-phospho-beta-D-ribosyl)-5-[(5-phospho-beta-D-ribosylamino)methylideneamino]imidazole-4-carboxamide = 5-[(5-phospho-1-deoxy-D-ribulos-1-ylimino)methylamino]-1-(5-phospho-beta-D-ribosyl)imidazole-4-carboxamide. It functions in the pathway amino-acid biosynthesis; L-histidine biosynthesis; L-histidine from 5-phospho-alpha-D-ribose 1-diphosphate: step 4/9. This is 1-(5-phosphoribosyl)-5-[(5-phosphoribosylamino)methylideneamino] imidazole-4-carboxamide isomerase from Nocardia farcinica (strain IFM 10152).